The primary structure comprises 216 residues: Ribosome maturation factor RimP (216 aa).

The protein belongs to the RimP family.

It localises to the cytoplasm. Its function is as follows. Required for maturation of 30S ribosomal subunits. This chain is Ribosome maturation factor RimP, found in Bartonella henselae (strain ATCC 49882 / DSM 28221 / CCUG 30454 / Houston 1) (Rochalimaea henselae).